Reading from the N-terminus, the 337-residue chain is Mannan polymerase complex subunit mnn9 (337 aa).

Residues M1–R8 lie on the Cytoplasmic side of the membrane. Residues I9–P29 form a helical; Signal-anchor for type II membrane protein membrane-spanning segment. At S30 to E337 the chain is on the lumenal side.

This sequence belongs to the ANP1/MMN9/VAN1 family.

It localises to the endoplasmic reticulum membrane. It is found in the golgi apparatus membrane. Its pathway is protein modification; protein glycosylation. Required for the addition of the long alpha 1,6-mannose backbone of N-linked glycans on cell wall and periplasmic proteins. The protein is Mannan polymerase complex subunit mnn9 of Schizosaccharomyces pombe (strain 972 / ATCC 24843) (Fission yeast).